The primary structure comprises 383 residues: Putative glutamate--cysteine ligase 2 (383 aa).

The protein belongs to the glutamate--cysteine ligase type 2 family. YbdK subfamily.

The catalysed reaction is L-cysteine + L-glutamate + ATP = gamma-L-glutamyl-L-cysteine + ADP + phosphate + H(+). Functionally, ATP-dependent carboxylate-amine ligase which exhibits weak glutamate--cysteine ligase activity. The sequence is that of Putative glutamate--cysteine ligase 2 from Clavibacter sepedonicus (Clavibacter michiganensis subsp. sepedonicus).